A 515-amino-acid chain; its full sequence is Cytochrome P450 705A22 (515 aa).

The chain crosses the membrane as a helical span at residues 9–29 (FQNCFIFILIFLLTFLCFFFF). Cys454 provides a ligand contact to heme.

The protein belongs to the cytochrome P450 family. The cofactor is heme.

It is found in the membrane. Its function is as follows. Plays a role in the gravitropic response of the inflorescence stems and roots. May affect the synthesis of flavonols that have a role in regulating auxin transport. This chain is Cytochrome P450 705A22, found in Arabidopsis thaliana (Mouse-ear cress).